A 77-amino-acid chain; its full sequence is MKEQKWIHEGLITESLPNGMFRVRLDNENMILGYVSGRIRRSFIRILPGDRVKIEVSRYDSTKGRIIYRIRNKDSNN.

Residues 1–71 (MKEQKWIHEG…TKGRIIYRIR (71 aa)) enclose the S1-like domain.

Belongs to the IF-1 family. As to quaternary structure, component of the 30S ribosomal translation pre-initiation complex which assembles on the 30S ribosome in the order IF-2 and IF-3, IF-1 and N-formylmethionyl-tRNA(fMet); mRNA recruitment can occur at any time during PIC assembly.

Its subcellular location is the plastid. It is found in the chloroplast. Functionally, one of the essential components for the initiation of protein synthesis. Stabilizes the binding of IF-2 and IF-3 on the 30S subunit to which N-formylmethionyl-tRNA(fMet) subsequently binds. Helps modulate mRNA selection, yielding the 30S pre-initiation complex (PIC). Upon addition of the 50S ribosomal subunit IF-1, IF-2 and IF-3 are released leaving the mature 70S translation initiation complex. This is Translation initiation factor IF-1, chloroplastic from Vitis vinifera (Grape).